An 87-amino-acid chain; its full sequence is MSVKIRLARFGAKKRPFYRVVVADSRVARDGRFIELLGFYNPMLPKEHPSFLKVKIDRLKYWLSVGAQPTERISWFIKKGLISTEAA.

The protein belongs to the bacterial ribosomal protein bS16 family.

The protein is Small ribosomal subunit protein bS16 of Ehrlichia ruminantium (strain Gardel).